Consider the following 303-residue polypeptide: MMKKWLLAAASLLMVVTLAGCGSNTIATLKGGKVTQDEFYKEIKETSAGKQQVQQMILQKALQEQYGSKSLTKKIDKTYNTYKKQYGSSFTSVLAQSGLTTSSFKNQITTQMLANAALKANKKVTNADLKKQWKTYEPKVEVQHILVEKKDTAETVISELKKDNSTKNFTALAKKYSTDTGTKKDGGKLPVFDSTDTSLDPTFKTAAFKLKTNEYTTTPVKTSYGYHVIRMIKNPGKGKMADHKKTLTDQVYAKWANDQTVMAKVYTKVLKKADVTIKDKDLSDILSSYGVNAKKSSAKSSSK.

The signal sequence occupies residues 1–20 (MMKKWLLAAASLLMVVTLAG). The N-palmitoyl cysteine moiety is linked to residue Cys-21. Cys-21 is lipidated: S-diacylglycerol cysteine. One can recognise a PpiC domain in the interval 137 to 233 (EPKVEVQHIL…YGYHVIRMIK (97 aa)).

It belongs to the PrsA family.

It localises to the cell membrane. The catalysed reaction is [protein]-peptidylproline (omega=180) = [protein]-peptidylproline (omega=0). Plays a major role in protein secretion by helping the post-translocational extracellular folding of several secreted proteins. The sequence is that of Foldase protein PrsA from Latilactobacillus sakei subsp. sakei (strain 23K) (Lactobacillus sakei subsp. sakei).